Reading from the N-terminus, the 191-residue chain is Threonylcarbamoyl-AMP synthase (191 aa).

The YrdC-like domain occupies 10–191; the sequence is VPKLTQCVRT…DLYTDAIIRA (182 aa).

It belongs to the SUA5 family. TsaC subfamily.

It is found in the cytoplasm. It catalyses the reaction L-threonine + hydrogencarbonate + ATP = L-threonylcarbamoyladenylate + diphosphate + H2O. Required for the formation of a threonylcarbamoyl group on adenosine at position 37 (t(6)A37) in tRNAs that read codons beginning with adenine. Catalyzes the conversion of L-threonine, HCO(3)(-)/CO(2) and ATP to give threonylcarbamoyl-AMP (TC-AMP) as the acyladenylate intermediate, with the release of diphosphate. The polypeptide is Threonylcarbamoyl-AMP synthase (Saccharophagus degradans (strain 2-40 / ATCC 43961 / DSM 17024)).